We begin with the raw amino-acid sequence, 432 residues long: Glutamate-1-semialdehyde 2,1-aminomutase (432 aa).

K265 carries the post-translational modification N6-(pyridoxal phosphate)lysine.

It belongs to the class-III pyridoxal-phosphate-dependent aminotransferase family. HemL subfamily. In terms of assembly, homodimer. Requires pyridoxal 5'-phosphate as cofactor.

It localises to the cytoplasm. The enzyme catalyses (S)-4-amino-5-oxopentanoate = 5-aminolevulinate. Its pathway is porphyrin-containing compound metabolism; protoporphyrin-IX biosynthesis; 5-aminolevulinate from L-glutamyl-tRNA(Glu): step 2/2. This Histophilus somni (strain 2336) (Haemophilus somnus) protein is Glutamate-1-semialdehyde 2,1-aminomutase.